A 197-amino-acid polypeptide reads, in one-letter code: Orotate phosphoribosyltransferase (197 aa).

Residues Arg87, Lys91, His93, and 112-120 (DDVATTGGS) each bind 5-phospho-alpha-D-ribose 1-diphosphate. Residues Thr116 and Arg144 each contribute to the orotate site.

The protein belongs to the purine/pyrimidine phosphoribosyltransferase family. PyrE subfamily. Homodimer. The cofactor is Mg(2+).

The catalysed reaction is orotidine 5'-phosphate + diphosphate = orotate + 5-phospho-alpha-D-ribose 1-diphosphate. It participates in pyrimidine metabolism; UMP biosynthesis via de novo pathway; UMP from orotate: step 1/2. Functionally, catalyzes the transfer of a ribosyl phosphate group from 5-phosphoribose 1-diphosphate to orotate, leading to the formation of orotidine monophosphate (OMP). The protein is Orotate phosphoribosyltransferase of Sulfolobus acidocaldarius (strain ATCC 33909 / DSM 639 / JCM 8929 / NBRC 15157 / NCIMB 11770).